Consider the following 173-residue polypeptide: Shikimate kinase 1 (173 aa).

14 to 19 (GAGKST) serves as a coordination point for ATP. A Mg(2+)-binding site is contributed by Ser18. Residues Asp36, Arg60, and Gly82 each contribute to the substrate site. An ATP-binding site is contributed by Arg120. A substrate-binding site is contributed by Arg140.

This sequence belongs to the shikimate kinase family. As to quaternary structure, monomer. Mg(2+) is required as a cofactor.

The protein resides in the cytoplasm. It catalyses the reaction shikimate + ATP = 3-phosphoshikimate + ADP + H(+). The protein operates within metabolic intermediate biosynthesis; chorismate biosynthesis; chorismate from D-erythrose 4-phosphate and phosphoenolpyruvate: step 5/7. Functionally, catalyzes the specific phosphorylation of the 3-hydroxyl group of shikimic acid using ATP as a cosubstrate. This is Shikimate kinase 1 from Hamiltonella defensa subsp. Acyrthosiphon pisum (strain 5AT).